The sequence spans 153 residues: Transcriptional repressor NrdR (153 aa).

A zinc finger lies at 3–34 (CPFCGHLEDRVIDSRAGGAGEVIRRRRECASC). In terms of domain architecture, ATP-cone spans 49-139 (PTVVKKDGRR…VYRSFRDIDQ (91 aa)).

This sequence belongs to the NrdR family. Requires Zn(2+) as cofactor.

Its function is as follows. Negatively regulates transcription of bacterial ribonucleotide reductase nrd genes and operons by binding to NrdR-boxes. The sequence is that of Transcriptional repressor NrdR from Sorangium cellulosum (strain So ce56) (Polyangium cellulosum (strain So ce56)).